The sequence spans 432 residues: Adenylosuccinate synthetase (432 aa).

GTP contacts are provided by residues Gly12–Lys18 and Gly40–Thr42. The Proton acceptor role is filled by Asp13. Mg(2+)-binding residues include Asp13 and Gly40. Residues Asp13–Lys16, Asn38–His41, Thr130, Arg144, Gln225, Thr240, and Arg304 contribute to the IMP site. His41 functions as the Proton donor in the catalytic mechanism. Ala300–Arg306 contacts substrate. GTP is bound by residues Arg306, Lys332 to Asp334, and Ser415 to Gly417.

Belongs to the adenylosuccinate synthetase family. As to quaternary structure, homodimer. The cofactor is Mg(2+).

It is found in the cytoplasm. The enzyme catalyses IMP + L-aspartate + GTP = N(6)-(1,2-dicarboxyethyl)-AMP + GDP + phosphate + 2 H(+). The protein operates within purine metabolism; AMP biosynthesis via de novo pathway; AMP from IMP: step 1/2. In terms of biological role, plays an important role in the de novo pathway of purine nucleotide biosynthesis. Catalyzes the first committed step in the biosynthesis of AMP from IMP. This Syntrophus aciditrophicus (strain SB) protein is Adenylosuccinate synthetase.